Reading from the N-terminus, the 409-residue chain is Nucleoprotein (409 aa).

Disordered stretches follow at residues 1–64 (MSAG…SNVK) and 167–197 (RNSS…VDDD). The tract at residues 30–161 (GTGQASWFQS…NNYRWDFIAL (132 aa)) is RNA-binding. In terms of domain architecture, CoV N NTD spans 32-157 (GQASWFQSLK…GGPDNNYRWD (126 aa)). Residues 176–197 (ENSRPGSRDSSRGRQRSRVDDD) are compositionally biased toward basic and acidic residues. Phosphoserine; by host is present on Ser192. Residues 217–333 (SKQKANEMAE…ECVDGVGTRP (117 aa)) form the CoV N CTD domain. A dimerization region spans residues 228 to 335 (KYHKRAIAPG…VDGVGTRPKD (108 aa)). A disulfide bridge connects residues Cys322 and Cys325. A disordered region spans residues 327 to 409 (DGVGTRPKDD…GEGAFDDINI (83 aa)). A compositionally biased stretch (basic and acidic residues) spans 332–349 (RPKDDPTPRSRAASKDRN). Position 374 is a phosphothreonine; by host (Thr374).

The protein belongs to the gammacoronavirus nucleocapsid protein family. Homooligomer. Both monomeric and oligomeric forms interact with RNA. Interacts with protein M. Interacts with NSP3; this interaction serves to tether the genome to the newly translated replicase-transcriptase complex at a very early stage of infection. ADP-ribosylated. The ADP-ribosylation is retained in the virion during infection. In terms of processing, phosphorylated on serine and threonine residues.

The protein localises to the virion. It localises to the host endoplasmic reticulum-Golgi intermediate compartment. The protein resides in the host Golgi apparatus. Its function is as follows. Packages the positive strand viral genome RNA into a helical ribonucleocapsid (RNP) and plays a fundamental role during virion assembly through its interactions with the viral genome and membrane protein M. Plays an important role in enhancing the efficiency of subgenomic viral RNA transcription as well as viral replication. This is Nucleoprotein from Gallus gallus (Chicken).